A 247-amino-acid chain; its full sequence is Carboxy-S-adenosyl-L-methionine synthase (247 aa).

Residues Tyr-38, 63–65, Asn-131, and Arg-198 each bind S-adenosyl-L-methionine; that span reads GCS.

This sequence belongs to the class I-like SAM-binding methyltransferase superfamily. Cx-SAM synthase family. In terms of assembly, homodimer.

The enzyme catalyses prephenate + S-adenosyl-L-methionine = carboxy-S-adenosyl-L-methionine + 3-phenylpyruvate + H2O. Catalyzes the conversion of S-adenosyl-L-methionine (SAM) to carboxy-S-adenosyl-L-methionine (Cx-SAM). This Desulforapulum autotrophicum (strain ATCC 43914 / DSM 3382 / VKM B-1955 / HRM2) (Desulfobacterium autotrophicum) protein is Carboxy-S-adenosyl-L-methionine synthase.